The sequence spans 491 residues: MAEELTPENPAIPETPEETEEPIKQRKNGLYPGVSDELAENMQSGWADTELHDLEPIAQAAETAARRAALSARFPGERLVIPAGNLKTRSNDTEYSFRASVEYAYLTGNQTEDGVLVMEPEGDGHAATIYLLPRSDRENGEFWLDGQGELWVGRRHSLAEAGELYGIPASDVRELAGSLREATGPVRVVRGFDAGIEAALTDKVTAERDEELRVFLSEARLVKDEFEIGELQKAVDSTVRGFEDVVKVLDRAEATSERYIEGTFFLRARVEGNDVGYGSICAAGPHACTLHWVRNDGPVRSGDLLLLDAGVETHTYYTADVTRTLPISGTYSELQKKIYDAVYDAQEAGIAAVRPGAKYRDFHDASQRVLAERLVEWGLVEGPVERVLELGLQRRWTLHGTGHMLGMDVHDCAAARVESYVDGTLEPGMVLTVEPGLYFQADDLTVPEEYRGIGVRIEDDILVTADGNRNLSAGLPRRSDEVEEWMAALKG.

Residues 1–32 (MAEELTPENPAIPETPEETEEPIKQRKNGLYP) are disordered. Residues Asp308, Asp320, His403, Glu434, and Glu458 each coordinate Mn(2+).

The protein belongs to the peptidase M24B family. In terms of assembly, homodimer. Mn(2+) serves as cofactor.

The catalysed reaction is Release of any N-terminal amino acid, including proline, that is linked to proline, even from a dipeptide or tripeptide.. The sequence is that of Xaa-Pro aminopeptidase 1 (pepPI) from Streptomyces coelicolor (strain ATCC BAA-471 / A3(2) / M145).